Consider the following 404-residue polypeptide: Histidine--tRNA ligase (404 aa).

This sequence belongs to the class-II aminoacyl-tRNA synthetase family.

It localises to the cytoplasm. It catalyses the reaction tRNA(His) + L-histidine + ATP = L-histidyl-tRNA(His) + AMP + diphosphate + H(+). In Nanoarchaeum equitans (strain Kin4-M), this protein is Histidine--tRNA ligase.